Consider the following 292-residue polypeptide: Nitrogenase iron protein 2 (292 aa).

Position 8–15 (Gly-8–Ser-15) interacts with ATP. Cys-106 provides a ligand contact to [4Fe-4S] cluster. Arg-109 carries the ADP-ribosylarginine; by dinitrogenase reductase ADP-ribosyltransferase modification. Cys-142 is a binding site for [4Fe-4S] cluster.

The protein belongs to the NifH/BchL/ChlL family. Homodimer. Requires [4Fe-4S] cluster as cofactor. The reversible ADP-ribosylation of Arg-109 inactivates the nitrogenase reductase and regulates nitrogenase activity.

It carries out the reaction N2 + 8 reduced [2Fe-2S]-[ferredoxin] + 16 ATP + 16 H2O = H2 + 8 oxidized [2Fe-2S]-[ferredoxin] + 2 NH4(+) + 16 ADP + 16 phosphate + 6 H(+). In terms of biological role, the key enzymatic reactions in nitrogen fixation are catalyzed by the nitrogenase complex, which has 2 components: the iron protein and the molybdenum-iron protein. The polypeptide is Nitrogenase iron protein 2 (nifH2) (Methanothermococcus thermolithotrophicus (Methanococcus thermolithotrophicus)).